Reading from the N-terminus, the 564-residue chain is MGVVNLLSRSSFPSVDSYLALSVLVAIVASVTVFTTFRSQPELQKLIEEELRNNTRLSSAYGLNIEALSGHTFFQIAHYILSDTTLIWVAINSYFAILAVCTRLIIKLTFKELARQEENVARQAFFCYVLLTIVYLSVVIGPQKGHRVMPWMIWGGICAFLSHLQFITCQRLKHISPSCDRGSQKISFLSLFLFFVSIAMTFLISRFQHHLTWQPAVLLYFDCLLAVFRSTYILFRCISSSRVFSFNPDSVRHFNYWLELITNFVCELIQMLSFAQLLAFSPGLNLTSIFFLYHMKLTYNCMTEQLSRHRNHKKIFEHIERSYPSVKCANGDDRCVVCWELLGTSRRLPCSHQFHDWCLMWWLAQDSSCPTCRCTIPSPQDQIRQPPEVGNSTRLRFNGGSFGFVHFPAFTLEVAANFGPFFGRAAEPTEEQLQTMLEQVREMFPQMSVDIIMTDLRQSGSAQSTIENILEGRIGMNASFMPGGVLDDELSDESENEIEYEEPAEIVQEPDNGRQRTWTKLSSSSGDEDLSYYEIQRAKMIETYRRKYLESDKAADLRAMGITE.

Residues 17-37 (SYLALSVLVAIVASVTVFTTF) traverse the membrane as a helical segment. Asparagine 53 carries an N-linked (GlcNAc...) asparagine glycan. 7 helical membrane-spanning segments follow: residues 61 to 81 (YGLNIEALSGHTFFQIAHYIL), 86 to 106 (LIWVAINSYFAILAVCTRLII), 123 to 143 (QAFFCYVLLTIVYLSVVIGPQ), 148 to 168 (VMPWMIWGGICAFLSHLQFIT), 185 to 205 (KISFLSLFLFFVSIAMTFLIS), 215 to 235 (PAVLLYFDCLLAVFRSTYILF), and 272 to 292 (LSFAQLLAFSPGLNLTSIFFL). An RING-type; atypical zinc finger spans residues 335-373 (CVVCWELLGTSRRLPCSHQFHDWCLMWWLAQDSSCPTCR). Residues 432-474 (QLQTMLEQVREMFPQMSVDIIMTDLRQSGSAQSTIENILEGRI) enclose the CUE domain.

The protein resides in the membrane. Its function is as follows. Proposed to have a role in neuroprotection. This chain is E3 ubiquitin-protein ligase hrd-like protein 1 (hrdl-1), found in Caenorhabditis elegans.